A 497-amino-acid polypeptide reads, in one-letter code: 3-ketoacyl-CoA synthase 6 (497 aa).

Transmembrane regions (helical) follow at residues 25–45 (LVNH…AVEL) and 64–84 (LVQV…YFMS). The 290-residue stretch at 81-370 (YFMSKPRTIY…FLTSLIGRKI (290 aa)) folds into the FAE domain. Catalysis depends on residues Cys-225, His-304, His-388, His-392, His-421, and Asn-425.

The protein belongs to the thiolase-like superfamily. Chalcone/stilbene synthases family. In epidermal cells of aerial tissues and in the tapetum of anthers near maturity. Expressed in siliques, flowers and leaves.

It is found in the endoplasmic reticulum membrane. It catalyses the reaction a very-long-chain acyl-CoA + malonyl-CoA + H(+) = a very-long-chain 3-oxoacyl-CoA + CO2 + CoA. It participates in lipid metabolism; fatty acid biosynthesis. Its activity is regulated as follows. Strongly inhibited by metazachlor and mefluidide. Functionally, contributes to cuticular wax and suberin biosynthesis. Involved in both decarbonylation and acyl-reduction wax synthesis pathways. Required for elongation of C24 fatty acids, an essential step of the cuticular wax production. Major condensing enzyme for stem wax and pollen coat lipid biosynthesis. This is 3-ketoacyl-CoA synthase 6 from Arabidopsis thaliana (Mouse-ear cress).